Here is a 632-residue protein sequence, read N- to C-terminus: Pheromone-processing carboxypeptidase kex1 (632 aa).

Positions 1 to 38 (MLLTTPSSRGSRAQSGIANVSWLALSLLLLFSPTLGSA) are cleaved as a signal peptide. Topologically, residues 39 to 523 (KSAADYYVRS…KETEWKAYAK (485 aa)) are lumenal. N-linked (GlcNAc...) asparagine glycosylation is found at Asn-119 and Asn-126. Active-site residues include Ser-190 and Asp-390. N-linked (GlcNAc...) asparagine glycosylation is found at Asn-441 and Asn-449. His-452 is a catalytic residue. The segment at 480-509 (KPADSRIDGEKLPQTSVGGHPNSTAAEQQA) is disordered. A compositionally biased stretch (polar residues) spans 492–506 (PQTSVGGHPNSTAAE). Residue Asn-501 is glycosylated (N-linked (GlcNAc...) asparagine). The helical transmembrane segment at 524 to 544 (SGEAALIVVIIGVTVWGFFIW) threads the bilayer. Topologically, residues 545–632 (RSRRRNRGYQ…SSTKPGGAQP (88 aa)) are cytoplasmic. The tract at residues 574–632 (RSGPADVEAGDFDESELDNLHSPGLEQEHYAVGDDSDEESPNHQPAAPPSSTKPGGAQP) is disordered. Acidic residues predominate over residues 581–590 (EAGDFDESEL).

This sequence belongs to the peptidase S10 family.

The protein resides in the golgi apparatus. It is found in the trans-Golgi network membrane. It catalyses the reaction Preferential release of a C-terminal arginine or lysine residue.. In terms of biological role, protease with a carboxypeptidase B-like function involved in the C-terminal processing of the lysine and arginine residues from protein precursors. Promotes cell fusion and is involved in the programmed cell death. The sequence is that of Pheromone-processing carboxypeptidase kex1 (kex1) from Aspergillus fumigatus (strain CBS 144.89 / FGSC A1163 / CEA10) (Neosartorya fumigata).